The chain runs to 242 residues: Biosynthetic peptidoglycan transglycosylase (242 aa).

A helical transmembrane segment spans residues 19–39 (LMVVLAVFWGGGIALFSVAPV).

This sequence belongs to the glycosyltransferase 51 family.

Its subcellular location is the cell inner membrane. The catalysed reaction is [GlcNAc-(1-&gt;4)-Mur2Ac(oyl-L-Ala-gamma-D-Glu-L-Lys-D-Ala-D-Ala)](n)-di-trans,octa-cis-undecaprenyl diphosphate + beta-D-GlcNAc-(1-&gt;4)-Mur2Ac(oyl-L-Ala-gamma-D-Glu-L-Lys-D-Ala-D-Ala)-di-trans,octa-cis-undecaprenyl diphosphate = [GlcNAc-(1-&gt;4)-Mur2Ac(oyl-L-Ala-gamma-D-Glu-L-Lys-D-Ala-D-Ala)](n+1)-di-trans,octa-cis-undecaprenyl diphosphate + di-trans,octa-cis-undecaprenyl diphosphate + H(+). The protein operates within cell wall biogenesis; peptidoglycan biosynthesis. In terms of biological role, peptidoglycan polymerase that catalyzes glycan chain elongation from lipid-linked precursors. The sequence is that of Biosynthetic peptidoglycan transglycosylase from Escherichia coli O157:H7.